We begin with the raw amino-acid sequence, 366 residues long: Adenine DNA glycosylase (366 aa).

30–31 (WR) contributes to the DNA binding site. The active-site Proton donor/acceptor is Glu-43. Residues 48 to 49 (QT), 86 to 88 (LGY), Tyr-126, and Glu-188 contribute to the DNA site. A HhH domain is found at 105 to 133 (RYGGKVPDDPDEFSRLKGVGPYTVGAVLS). Residues Cys-198, Cys-205, Cys-208, and Cys-214 each contribute to the [4Fe-4S] cluster site. Residue Ser-308 participates in DNA binding.

The protein belongs to the Nth/MutY family. [4Fe-4S] cluster serves as cofactor.

It carries out the reaction Hydrolyzes free adenine bases from 7,8-dihydro-8-oxoguanine:adenine mismatched double-stranded DNA, leaving an apurinic site.. In terms of biological role, base excision repair (BER) glycosylase that initiates repair of A:oxoG to C:G by removing the inappropriately paired adenine base from the DNA backbone, generating an abasic site product. 8-oxoguanine (oxoG) is a genotoxic DNA lesion resulting from oxidation of guanine; this residue is misread by replicative DNA polymerases, that insert adenine instead of cytosine opposite the oxidized damaged base. Shows a powerful dicrimination of A versus C, since it does not cleave cytosine in oxoG:C pairs. May also be able to remove adenine from A:G mispairs, although this activity may not be physiologically relevant. The protein is Adenine DNA glycosylase of Geobacillus stearothermophilus (Bacillus stearothermophilus).